A 367-amino-acid chain; its full sequence is Pyrimidine monooxygenase RutA (367 aa).

Residues 50–51 (IK), asparagine 116, glutamate 125, 141–142 (RY), and serine 191 contribute to the FMN site.

Belongs to the NtaA/SnaA/DszA monooxygenase family. RutA subfamily.

The catalysed reaction is uracil + FMNH2 + NADH + O2 = (Z)-3-ureidoacrylate + FMN + NAD(+) + H2O + H(+). It carries out the reaction thymine + FMNH2 + NADH + O2 = (Z)-2-methylureidoacrylate + FMN + NAD(+) + H2O + H(+). Its function is as follows. Catalyzes the pyrimidine ring opening between N-3 and C-4 by an unusual flavin hydroperoxide-catalyzed mechanism, adding oxygen atoms in the process to yield ureidoacrylate peracid, that immediately reacts with FMN forming ureidoacrylate and FMN-N(5)-oxide. The FMN-N(5)-oxide reacts spontaneously with NADH to produce FMN. Requires the flavin reductase RutF to regenerate FMN in vivo. This chain is Pyrimidine monooxygenase RutA, found in Allorhizobium ampelinum (strain ATCC BAA-846 / DSM 112012 / S4) (Agrobacterium vitis (strain S4)).